Here is a 149-residue protein sequence, read N- to C-terminus: Transcriptional repressor NrdR (149 aa).

Residues 3 to 34 fold into a zinc finger; that stretch reads CPFCCAVDTKVIDSRLVGEGSSVRRRRQCVVC. The ATP-cone domain maps to 49 to 139; the sequence is PRVVKSNDVR…VYRSFEDIRE (91 aa).

It belongs to the NrdR family. Zn(2+) serves as cofactor.

Its function is as follows. Negatively regulates transcription of bacterial ribonucleotide reductase nrd genes and operons by binding to NrdR-boxes. The sequence is that of Transcriptional repressor NrdR from Erwinia tasmaniensis (strain DSM 17950 / CFBP 7177 / CIP 109463 / NCPPB 4357 / Et1/99).